Here is a 228-residue protein sequence, read N- to C-terminus: Protein Iojap, chloroplastic (228 aa).

Residues 1–54 are disordered; sequence MGGTSAAVPSHGLACAPPAAVTLNPRARRRRASSGSGGHRSSPQQPLRSDLLPP. The N-terminal 62 residues, 1–62, are a transit peptide targeting the chloroplast; the sequence is MGGTSAAVPS…PPATVACRAR (62 aa).

The protein belongs to the Iojap/RsfS family. Interacts with chloroplast ribosomal protein uL14c (rpl14).

The protein localises to the plastid. Its subcellular location is the chloroplast. In terms of biological role, may be a ribosome silencing factor (Potential). Involved in plastid biogenesis. Plastids affected by a mutation in Iojap lose the ability to perform translation and lack plastid ribosomes. This is Protein Iojap, chloroplastic (Ij) from Zea mays (Maize).